The chain runs to 249 residues: Small ribosomal subunit protein eS6 (249 aa).

2 disordered regions span residues 161 to 181 (PLAK…RLVT) and 194 to 249 (LKKQ…SSQK). Residues 216–229 (RSKEAKEKRQEQIA) are compositionally biased toward basic and acidic residues. Residues Ser235, Ser236, Ser240, Ser244, and Ser247 each carry the phosphoserine modification. Residues 236–249 (SLRASTSKSESSQK) are compositionally biased toward low complexity.

The protein belongs to the eukaryotic ribosomal protein eS6 family. Component of the small ribosomal subunit. Part of the small subunit (SSU) processome, composed of more than 70 proteins and the RNA chaperone small nucleolar RNA (snoRNA) U3. In terms of processing, ribosomal protein S6 is the major substrate of protein kinases in eukaryote ribosomes. The phosphorylation is stimulated by growth factors, tumor promoting agents, and mitogens. It is dephosphorylated at growth arrest.

It is found in the cytoplasm. The protein resides in the nucleus. Its subcellular location is the nucleolus. Component of the 40S small ribosomal subunit. Plays an important role in controlling cell growth and proliferation through the selective translation of particular classes of mRNA. Part of the small subunit (SSU) processome, first precursor of the small eukaryotic ribosomal subunit. During the assembly of the SSU processome in the nucleolus, many ribosome biogenesis factors, an RNA chaperone and ribosomal proteins associate with the nascent pre-rRNA and work in concert to generate RNA folding, modifications, rearrangements and cleavage as well as targeted degradation of pre-ribosomal RNA by the RNA exosome. The protein is Small ribosomal subunit protein eS6 (rps6) of Xenopus laevis (African clawed frog).